Reading from the N-terminus, the 2325-residue chain is Protein sidekick homolog (2325 aa).

The first 26 residues, 1–26, serve as a signal peptide directing secretion; the sequence is MRNRLLLIFYTTTVLWTIGYTQLVLG. Residues 27-2019 lie on the Extracellular side of the membrane; it reads KPPIFQDGGS…IPDDPFYTTW (1993 aa). Ig-like C2-type domains are found at residues 28–105, 217–319, and 324–397; these read PPIF…AAIS, PSLQ…AYMT, and PILK…ADLA. 3 disulfide bridges follow: cysteine 52/cysteine 94, cysteine 247/cysteine 301, and cysteine 345/cysteine 386. An N-linked (GlcNAc...) asparagine glycan is attached at asparagine 407. 2 consecutive Ig-like C2-type domains span residues 456 to 544 and 547 to 638; these read PSQK…VQVN and SLIE…AMLQ. Disulfide bonds link cysteine 480/cysteine 528 and cysteine 568/cysteine 622. Residues asparagine 632, asparagine 655, asparagine 807, asparagine 868, asparagine 932, and asparagine 1016 are each glycosylated (N-linked (GlcNAc...) asparagine). 13 Fibronectin type-III domains span residues 645–751, 756–853, 858–957, 961–1055, 1059–1154, 1159–1254, 1259–1359, 1363–1457, 1463–1566, 1571–1671, 1673–1775, 1776–1872, and 1873–2004; these read MPER…MPQQ, APRN…TSEG, APKN…TEED, SVDE…VPPE, RPSM…TLQT, PSQR…TYES, SPRN…TMED, PPES…SSVR, APAP…TLPS, QPIS…VGYS, PKRN…DKPG, PVGI…SKDG, and PPPP…TEQL. The disordered stretch occupies residues 1036–1059; that stretch reads TRKGDGPVEETKFESGVPPELPGR. Residues 1037–1048 show a composition bias toward basic and acidic residues; the sequence is RKGDGPVEETKF. An N-linked (GlcNAc...) asparagine glycan is attached at asparagine 1107. The disordered stretch occupies residues 1137–1161; the sequence is KGRGAPSEPSRSFETLQTNPDTPSQ. The span at 1145–1161 shows a compositional bias: polar residues; sequence PSRSFETLQTNPDTPSQ. Asparagine 1614 carries N-linked (GlcNAc...) asparagine glycosylation. Disordered regions lie at residues 1857–1884 and 1918–1947; these read GEQR…ITSG and PANG…ATST. N-linked (GlcNAc...) asparagine glycosylation is present at asparagine 1863. Over residues 1935–1947 the composition is skewed to low complexity; that stretch reads AKSAAQTAAATST. A helical membrane pass occupies residues 2020 to 2040; it reads WFMALVAMGAFVLIVIIIAIL. The Cytoplasmic segment spans residues 2041–2325; that stretch reads CVTGSSAKYR…NLTTGFSSFV (285 aa). Disordered stretches follow at residues 2080-2113, 2164-2187, 2202-2226, and 2285-2325; these read NMTR…SVLG, TAYV…PTRS, RGHI…LQQP, and ILTG…SSFV. The span at 2091 to 2100 shows a compositional bias: polar residues; that stretch reads PGTTQSWVSD. A compositionally biased stretch (low complexity) spans 2215-2226; sequence GSQPQGSPLQQP. Composition is skewed to polar residues over residues 2294–2305 and 2313–2325; these read AGRSSTTDSTSE and ATPN…SSFV.

The protein belongs to the sidekick family.

It is found in the membrane. Cell adhesion protein. This is Protein sidekick homolog (rig-4) from Caenorhabditis elegans.